The sequence spans 420 residues: Histidine--tRNA ligase (420 aa).

The protein belongs to the class-II aminoacyl-tRNA synthetase family. As to quaternary structure, homodimer.

It is found in the cytoplasm. It carries out the reaction tRNA(His) + L-histidine + ATP = L-histidyl-tRNA(His) + AMP + diphosphate + H(+). This Thermotoga maritima (strain ATCC 43589 / DSM 3109 / JCM 10099 / NBRC 100826 / MSB8) protein is Histidine--tRNA ligase (hisS).